The primary structure comprises 233 residues: Ras-related protein RabV (233 aa).

Residue 15-22 (GEKEVGKS) participates in GTP binding. Residues 37–45 (YIPTIGIDF) carry the Effector region motif. GTP contacts are provided by residues 63–67 (DYVSH) and 122–125 (TKSD). Residues 143-182 (QNNNNNNNNNNNNNNNNNNNNNNNNNNNNNSNNNNNNNLQ) form a disordered region. A compositionally biased stretch (low complexity) spans 144–180 (NNNNNNNNNNNNNNNNNNNNNNNNNNNNNSNNNNNNN).

The protein belongs to the small GTPase superfamily. Rab family.

The sequence is that of Ras-related protein RabV (rabV) from Dictyostelium discoideum (Social amoeba).